Reading from the N-terminus, the 299-residue chain is ATP phosphoribosyltransferase (299 aa).

The protein belongs to the ATP phosphoribosyltransferase family. Long subfamily. Equilibrium between an active dimeric form, an inactive hexameric form and higher aggregates. Interconversion between the various forms is largely reversible and is influenced by the natural substrates and inhibitors of the enzyme. Mg(2+) serves as cofactor.

The protein resides in the cytoplasm. The enzyme catalyses 1-(5-phospho-beta-D-ribosyl)-ATP + diphosphate = 5-phospho-alpha-D-ribose 1-diphosphate + ATP. The protein operates within amino-acid biosynthesis; L-histidine biosynthesis; L-histidine from 5-phospho-alpha-D-ribose 1-diphosphate: step 1/9. With respect to regulation, feedback inhibited by histidine. Its function is as follows. Catalyzes the condensation of ATP and 5-phosphoribose 1-diphosphate to form N'-(5'-phosphoribosyl)-ATP (PR-ATP). Has a crucial role in the pathway because the rate of histidine biosynthesis seems to be controlled primarily by regulation of HisG enzymatic activity. The polypeptide is ATP phosphoribosyltransferase (Salmonella agona (strain SL483)).